Reading from the N-terminus, the 241-residue chain is Ribonuclease PH (241 aa).

Residues Arg90 and 128 to 130 (GTR) each bind phosphate.

This sequence belongs to the RNase PH family. In terms of assembly, homohexameric ring arranged as a trimer of dimers.

The enzyme catalyses tRNA(n+1) + phosphate = tRNA(n) + a ribonucleoside 5'-diphosphate. Functionally, phosphorolytic 3'-5' exoribonuclease that plays an important role in tRNA 3'-end maturation. Removes nucleotide residues following the 3'-CCA terminus of tRNAs; can also add nucleotides to the ends of RNA molecules by using nucleoside diphosphates as substrates, but this may not be physiologically important. Probably plays a role in initiation of 16S rRNA degradation (leading to ribosome degradation) during starvation. The polypeptide is Ribonuclease PH (Corynebacterium diphtheriae (strain ATCC 700971 / NCTC 13129 / Biotype gravis)).